The following is a 316-amino-acid chain: Thymidylate synthase (316 aa).

DUMP is bound by residues arginine 23 and 178 to 179 (RR). Catalysis depends on cysteine 198, which acts as the Nucleophile. Residues 218-221 (RSAD), asparagine 229, and 259-261 (HIY) each bind dUMP. Residue aspartate 221 participates in (6R)-5,10-methylene-5,6,7,8-tetrahydrofolate binding. Alanine 315 is a binding site for (6R)-5,10-methylene-5,6,7,8-tetrahydrofolate.

This sequence belongs to the thymidylate synthase family. Bacterial-type ThyA subfamily. As to quaternary structure, homodimer.

It is found in the cytoplasm. The catalysed reaction is dUMP + (6R)-5,10-methylene-5,6,7,8-tetrahydrofolate = 7,8-dihydrofolate + dTMP. It functions in the pathway pyrimidine metabolism; dTTP biosynthesis. Catalyzes the reductive methylation of 2'-deoxyuridine-5'-monophosphate (dUMP) to 2'-deoxythymidine-5'-monophosphate (dTMP) while utilizing 5,10-methylenetetrahydrofolate (mTHF) as the methyl donor and reductant in the reaction, yielding dihydrofolate (DHF) as a by-product. This enzymatic reaction provides an intracellular de novo source of dTMP, an essential precursor for DNA biosynthesis. In Levilactobacillus brevis (strain ATCC 367 / BCRC 12310 / CIP 105137 / JCM 1170 / LMG 11437 / NCIMB 947 / NCTC 947) (Lactobacillus brevis), this protein is Thymidylate synthase.